A 906-amino-acid polypeptide reads, in one-letter code: MQAAVAVSVPFLLLCVLGTCPPARCGQAGDASLMELEKRKENRFVERQSIVPLRLIYRSGGEDESRHDALDTRVRGDLGGPQLTHVDQASFQVDAFGTSFILDVVLNHDLLSSEYIERHIEHGGKTVEVKGGEHCYYQGHIRGNPDSFVALSTCHGLHGMFYDGNHTYLIEPEENDTTQEDFHFHSVYKSRLFEFSLDDLPSEFQQVNITPSKFILKPRPKRSKRQLRRYPRNVEEETKYIELMIVNDHLMFKKHRLSVVHTNTYAKSVVNMADLIYKDQLKTRIVLVAMETWATDNKFAISENPLITLREFMKYRRDFIKEKSDAVHLFSGSQFESSRSGAAYIGGICSLLKGGGVNEFGKTDLMAVTLAQSLAHNIGIISDKRKLASGECKCEDTWSGCIMGDTGYYLPKKFTQCNIEEYHDFLNSGGGACLFNKPSKLLDPPECGNGFIETGEECDCGTPAECVLEGAECCKKCTLTQDSQCSDGLCCKKCKFQPMGTVCREAVNDCDIRETCSGNSSQCAPNIHKMDGYSCDGVQGICFGGRCKTRDRQCKYIWGQKVTASDKYCYEKLNIEGTEKGNCGKDKDTWIQCNKRDVLCGYLLCTNIGNIPRLGELDGEITSTLVVQQGRTLNCSGGHVKLEEDVDLGYVEDGTPCGPQMMCLEHRCLPVASFNFSTCLSSKEGTICSGNGVCSNELKCVCNRHWIGSDCNTYFPHNDDAKTGITLSGNGVAGTNIIIGIIAGTILVLALILGITAWGYKNYREQRQLPQGDYVKKPGDGDSFYSDIPPGVSTNSASSSKKRSNGLSHSWSERIPDTKHISDICENGRPRSNSWQGNLGGNKKKIRGKRFRPRSNSTETLSPAKSPSSSTGSIASSRKYPYPMPPLPDEDKKVNRQSARLWETSI.

A signal peptide spans 1 to 25 (MQAAVAVSVPFLLLCVLGTCPPARC). The propeptide occupies 26 to 222 (GQAGDASLME…KFILKPRPKR (197 aa)). Asparagine 175 is a glycosylation site (N-linked (GlcNAc...) asparagine). Residues 223 to 736 (SKRQLRRYPR…LSGNGVAGTN (514 aa)) are Extracellular-facing. The region spanning 239–438 (KYIELMIVND…GGGACLFNKP (200 aa)) is the Peptidase M12B domain. 17 disulfide bridges follow: cysteine 349–cysteine 433, cysteine 392–cysteine 417, cysteine 394–cysteine 401, cysteine 447–cysteine 477, cysteine 458–cysteine 474, cysteine 460–cysteine 466, cysteine 473–cysteine 494, cysteine 485–cysteine 491, cysteine 490–cysteine 516, cysteine 503–cysteine 523, cysteine 510–cysteine 542, cysteine 535–cysteine 547, cysteine 554–cysteine 605, cysteine 569–cysteine 635, cysteine 583–cysteine 593, cysteine 600–cysteine 663, and cysteine 657–cysteine 668. A Disintegrin domain is found at 444–531 (PPECGNGFIE…QCAPNIHKMD (88 aa)). Asparagine 519 carries N-linked (GlcNAc...) asparagine glycosylation. Asparagine 634 is a glycosylation site (N-linked (GlcNAc...) asparagine). The N-linked (GlcNAc...) asparagine glycan is linked to asparagine 675. The region spanning 675–712 (NFSTCLSSKEGTICSGNGVCSNELKCVCNRHWIGSDCN) is the EGF-like domain. 3 cysteine pairs are disulfide-bonded: cysteine 679/cysteine 694, cysteine 688/cysteine 700, and cysteine 702/cysteine 711. The chain crosses the membrane as a helical span at residues 737–757 (IIIGIIAGTILVLALILGITA). Residues 758-906 (WGYKNYREQR…QSARLWETSI (149 aa)) lie on the Cytoplasmic side of the membrane. A disordered region spans residues 785–906 (YSDIPPGVST…QSARLWETSI (122 aa)). The span at 793–810 (STNSASSSKKRSNGLSHS) shows a compositional bias: low complexity. A Phosphoserine modification is found at serine 810. Positions 811–829 (WSERIPDTKHISDICENGR) are enriched in basic and acidic residues. The residue at position 834 (serine 834) is a Phosphoserine. Positions 842–853 (NKKKIRGKRFRP) are enriched in basic residues. Phosphoserine is present on residues serine 857, serine 862, serine 866, and serine 870. The segment covering 862 to 877 (SPAKSPSSSTGSIASS) has biased composition (low complexity).

In terms of assembly, interacts with LGI1. Interacts with DLG4/PSD95. Also binds LGI4. Interacts with KCNA2 and DLG2. Interacts with ADAM11. Interacts (via C-terminus) with YWHAB/14-3-3 beta. Interacts (via C-terminus) with YWHAZ/14-3-3 zeta. In terms of processing, the precursor is cleaved by a furin endopeptidase. Highly expressed in the brain and in some high-grade but not low-grade gliomas. Detected slightly or not at all in other tissues.

It is found in the cell membrane. It localises to the cell projection. Its subcellular location is the axon. Functionally, probable ligand for integrin in the brain. This is a non catalytic metalloprotease-like protein. Involved in regulation of cell adhesion and spreading and in inhibition of cell proliferation. Neuronal receptor for LGI1. The chain is Disintegrin and metalloproteinase domain-containing protein 22 (ADAM22) from Homo sapiens (Human).